A 332-amino-acid chain; its full sequence is T-cell leukemia homeobox protein 1 (332 aa).

A DNA-binding region (homeobox) is located at residues 203–262 (KKKPRTSFTRLQICELEKRFHRQKYLASAERAALAKALKMTDAQVKTWFQNRRTKWRRQT). N6-acetyllysine is present on Lys238.

Expressed in various embryonic tissues, including branchial arches, some component of the nervous system and spleen.

It localises to the nucleus. Functionally, controls the genesis of the spleen. Binds to the DNA sequence 5'-GGCGGTAAGTGG-3'. This chain is T-cell leukemia homeobox protein 1 (Tlx1), found in Mus musculus (Mouse).